The following is a 785-amino-acid chain: MGLQPLEFSDCYLDSPWFRERIRAHEAELERTNKFIKELIKDGKNLIAATKTLSAAQRKFAHSLRDFKFEFIGDAETDDERCIDASLREFSNFLKNLEEQREIMALSVTETLIKPLEKFRKEQLGAVKEEKKKFDKETERNYSLIDKHLNLSAKKKDSHLQEADIQVEQNRQHFYELSLEYVCKLQEIQERKKFEFVEPMLSFFQGMFTFYHQGHELAKDFNHYKMELQINIQNTRNRFEGTRSEVEELMNKIRQNPKDHKRASQFTAEGYLYVQEKRPPPFGSSWVKHYCMYRKAAKKFTMIPFEHRSGGKLGDGEVFFLKECIRRHTDSIDRRFCFDVEAADRPGISLTMQAFSEEERKQWLEVLGGKEALFPSFNRAIIPRPEGSAQLDKMGFTILRKCIRAVETRGINDQGLYRVVGVSSKVQRLLSMLMDVKTCNEVDLENSVDWEVKTITSALKQYLRSLPEPLMTYELHGDFIVPAKSGSPESRVNAIHFLVHKLPEKNKEMLDILVKHLTNVSNHSKQNLMTVANLGVVFGPTLMRPQEETVAAIMDLKFQNIVVEILIENHEKIFRTPPDATLPEPGPLSAPPNAPPRQSKRQGQRTKRPVAVYNLCLELEDGDRPSLPKEDTPPSSLDSLSSPSPTTATALGHPGPDRNHLLTDGGSFGDWAPTAPSQARSSAVQWLNPQSPTTPSCSPAVTPPSPKLPPVPLSLPATVADKPPESIISRKARAVYPCEAEHSSELSFEIGAIFEDVQTSREPGWLEGTLNGKRGLIPQNYVKLL.

The 256-residue stretch at 7 to 262 folds into the BAR domain; that stretch reads EFSDCYLDSP…IRQNPKDHKR (256 aa). Residues 265-372 enclose the PH domain; the sequence is QFTAEGYLYV…WLEVLGGKEA (108 aa). Residues 389–574 form the Rho-GAP domain; it reads AQLDKMGFTI…ILIENHEKIF (186 aa). A disordered region spans residues 576–708; that stretch reads TPPDATLPEP…PAVTPPSPKL (133 aa). Residues 584-595 are compositionally biased toward pro residues; it reads EPGPLSAPPNAP. Over residues 598–608 the composition is skewed to basic residues; sequence QSKRQGQRTKR. A compositionally biased stretch (basic and acidic residues) spans 622–632; it reads GDRPSLPKEDT. Residues 633–650 are compositionally biased toward low complexity; that stretch reads PPSSLDSLSSPSPTTATA. Positions 675–697 are enriched in polar residues; that stretch reads APSQARSSAVQWLNPQSPTTPSC. One can recognise an SH3 domain in the interval 727–785; sequence IISRKARAVYPCEAEHSSELSFEIGAIFEDVQTSREPGWLEGTLNGKRGLIPQNYVKLL.

As to quaternary structure, interacts with PKN3. Interacts with caspase-activated PAK2 proteolytic fragment PAK-2p34; the interaction does not affect ARHGAP10 GTPase activation activity towards RHOA and CDC42. Interacts via its SH3 domain with PTK2/FAK1. Interacts with PTK2B/PYK2; the interaction negatively regulates ARHGAP10 GTPase-activating activity. Interacts with MICAL1 and WDR44; complex formation might transit from GRAF2/ARHGAP10-MICAL1 to GRAF2/ARHGAP10-WDR44 complexes.

Its subcellular location is the cytoplasm. It is found in the perinuclear region. The protein resides in the cell membrane. The protein localises to the endosome membrane. Its function is as follows. GTPase-activating protein that catalyzes the conversion of active GTP-bound Rho GTPases to their inactive GDP-bound form, thus suppressing various Rho GTPase-mediated cellular processes. Also converts Cdc42 to an inactive GDP-bound state. Essential for PTKB2 regulation of cytoskeletal organization via Rho family GTPases. Inhibits PAK2 proteolytic fragment PAK-2p34 kinase activity and changes its localization from the nucleus to the perinuclear region. Stabilizes PAK-2p34 thereby increasing stimulation of cell death. Associates with MICAL1 on the endosomal membrane to promote Rab8-Rab10-dependent tubule extension. After dissociation with MICAL1, recruits WDR44 which connects the endoplasmic reticulum (ER) with the endosomal tubule, thereby participating in the export of a subset of neosynthesized proteins. The polypeptide is Rho GTPase-activating protein 10 (ARHGAP10) (Bos taurus (Bovine)).